We begin with the raw amino-acid sequence, 224 residues long: Ribosome maturation factor RimP (224 aa).

Residues 194 to 224 (REGRIPGDDLGSEEAGEQSDETASGEAEDKE) are disordered. Positions 203-213 (LGSEEAGEQSD) are enriched in acidic residues.

The protein belongs to the RimP family.

It localises to the cytoplasm. Required for maturation of 30S ribosomal subunits. This chain is Ribosome maturation factor RimP, found in Brucella anthropi (strain ATCC 49188 / DSM 6882 / CCUG 24695 / JCM 21032 / LMG 3331 / NBRC 15819 / NCTC 12168 / Alc 37) (Ochrobactrum anthropi).